A 145-amino-acid chain; its full sequence is MTLTDYVREVSLADFGKPFKHQASWNRRLRTTGGRFFPKDGHLDFNPKILEEHGETVFRQIVRHELCHYHLYFEGLGFRHKDQAFKELLAQVDGLRYAPRLQSHQANYLYICQDCGQAYDRKRPINLAVFACGRCHGRLIKKNQS.

Residues 5 to 141 (DYVREVSLAD…CGRCHGRLIK (137 aa)) form the SprT-like domain. Residue H64 participates in Zn(2+) binding. E65 is a catalytic residue. H68 is a Zn(2+) binding site.

This sequence belongs to the SprT family. Zn(2+) serves as cofactor.

Its subcellular location is the cytoplasm. In Streptococcus equi subsp. zooepidemicus (strain H70), this protein is Protein SprT-like.